A 451-amino-acid chain; its full sequence is Tubulin alpha-2 chain (451 aa).

Glutamine 11 provides a ligand contact to GTP. Lysine 40 carries the N6-acetyllysine modification. Residues glutamate 71, glycine 144, threonine 145, threonine 179, asparagine 206, and asparagine 228 each coordinate GTP. Residue glutamate 71 participates in Mg(2+) binding. The active site involves glutamate 254.

Belongs to the tubulin family. Dimer of alpha and beta chains. A typical microtubule is a hollow water-filled tube with an outer diameter of 25 nm and an inner diameter of 15 nM. Alpha-beta heterodimers associate head-to-tail to form protofilaments running lengthwise along the microtubule wall with the beta-tubulin subunit facing the microtubule plus end conferring a structural polarity. Microtubules usually have 13 protofilaments but different protofilament numbers can be found in some organisms and specialized cells. The cofactor is Mg(2+). Undergoes a tyrosination/detyrosination cycle, the cyclic removal and re-addition of a C-terminal tyrosine residue by the enzymes tubulin tyrosine carboxypeptidase (TTCP) and tubulin tyrosine ligase (TTL), respectively. In terms of processing, acetylation of alpha chains at Lys-40 stabilizes microtubules and affects affinity and processivity of microtubule motors. This modification has a role in multiple cellular functions, ranging from cell motility, cell cycle progression or cell differentiation to intracellular trafficking and signaling.

The protein localises to the cytoplasm. It localises to the cytoskeleton. It carries out the reaction GTP + H2O = GDP + phosphate + H(+). Functionally, tubulin is the major constituent of microtubules, a cylinder consisting of laterally associated linear protofilaments composed of alpha- and beta-tubulin heterodimers. Microtubules grow by the addition of GTP-tubulin dimers to the microtubule end, where a stabilizing cap forms. Below the cap, tubulin dimers are in GDP-bound state, owing to GTPase activity of alpha-tubulin. This chain is Tubulin alpha-2 chain (TUBA2), found in Hordeum vulgare (Barley).